Reading from the N-terminus, the 609-residue chain is DNA mismatch repair protein MutL (609 aa).

The interval 364 to 386 (SVNSKPTDYRPAMSPSFKSTPNT) is disordered.

Belongs to the DNA mismatch repair MutL/HexB family.

Its function is as follows. This protein is involved in the repair of mismatches in DNA. It is required for dam-dependent methyl-directed DNA mismatch repair. May act as a 'molecular matchmaker', a protein that promotes the formation of a stable complex between two or more DNA-binding proteins in an ATP-dependent manner without itself being part of a final effector complex. The sequence is that of DNA mismatch repair protein MutL from Rickettsia akari (strain Hartford).